The chain runs to 345 residues: Anthranilate phosphoribosyltransferase (345 aa).

5-phospho-alpha-D-ribose 1-diphosphate contacts are provided by residues glycine 84, 87-88, threonine 92, 94-97, 112-120, and serine 124; these read GD, NIST, and KHGNRSVSS. Glycine 84 is a binding site for anthranilate. Position 96 (serine 96) interacts with Mg(2+). Anthranilate is bound at residue asparagine 115. Arginine 170 serves as a coordination point for anthranilate. Positions 229 and 230 each coordinate Mg(2+).

The protein belongs to the anthranilate phosphoribosyltransferase family. In terms of assembly, homodimer. Requires Mg(2+) as cofactor.

It catalyses the reaction N-(5-phospho-beta-D-ribosyl)anthranilate + diphosphate = 5-phospho-alpha-D-ribose 1-diphosphate + anthranilate. Its pathway is amino-acid biosynthesis; L-tryptophan biosynthesis; L-tryptophan from chorismate: step 2/5. Catalyzes the transfer of the phosphoribosyl group of 5-phosphorylribose-1-pyrophosphate (PRPP) to anthranilate to yield N-(5'-phosphoribosyl)-anthranilate (PRA). The sequence is that of Anthranilate phosphoribosyltransferase from Xanthomonas oryzae pv. oryzae (strain MAFF 311018).